Reading from the N-terminus, the 326-residue chain is tRNA-modifying protein YgfZ (326 aa).

Residues tryptophan 27 and tryptophan 189 each contribute to the folate site.

The protein belongs to the tRNA-modifying YgfZ family.

It localises to the cytoplasm. In terms of biological role, folate-binding protein involved in regulating the level of ATP-DnaA and in the modification of some tRNAs. It is probably a key factor in regulatory networks that act via tRNA modification, such as initiation of chromosomal replication. This is tRNA-modifying protein YgfZ from Escherichia coli (strain SE11).